Consider the following 196-residue polypeptide: tRNA (pseudouridine(54)-N(1))-methyltransferase (196 aa).

Residue Leu-126 coordinates S-adenosyl-L-methionine.

This sequence belongs to the methyltransferase superfamily. TrmY family. As to quaternary structure, homodimer.

The protein localises to the cytoplasm. It catalyses the reaction pseudouridine(54) in tRNA + S-adenosyl-L-methionine = N(1)-methylpseudouridine(54) in tRNA + S-adenosyl-L-homocysteine + H(+). Functionally, specifically catalyzes the N1-methylation of pseudouridine at position 54 (Psi54) in tRNAs. This chain is tRNA (pseudouridine(54)-N(1))-methyltransferase, found in Halobacterium salinarum (strain ATCC 700922 / JCM 11081 / NRC-1) (Halobacterium halobium).